The chain runs to 189 residues: ECF RNA polymerase sigma-E factor (189 aa).

The tract at residues 1 to 153 is binds RNAP core; that stretch reads MAEQLTDQAL…TAITLRELEG (153 aa). Positions 25 to 92 are sigma-70 factor domain-2; it reads LVSRYQNKVA…KNYLTAQGRR (68 aa). The Polymerase core binding signature appears at 48–61; it reads DVVQESFIKAYRSI. A sigma-70 factor domain-4 region spans residues 129 to 180; that stretch reads RIVFDTIHNLPEDLKTAITLRELEGLSYEDIAEIMDCPVGTVRSRIFRAREM. The H-T-H motif DNA-binding region spans 156 to 175; sequence YEDIAEIMDCPVGTVRSRIF.

This sequence belongs to the sigma-70 factor family. ECF subfamily. As to quaternary structure, interacts transiently with the RNAP catalytic core formed by RpoA, RpoB, RpoC and RpoZ (2 alpha, 1 beta, 1 beta' and 1 omega subunit) to form the RNAP holoenzyme that can initiate transcription. Interacts 1:1 with anti-sigma-E factor RseA which prevents binding to RNAP catalytic core.

The protein localises to the cytoplasm. With respect to regulation, ECF sigma-E is held in an inactive form by its cognate anti-sigma factor (RseA) until released by regulated intramembrane proteolysis (RIP). RIP occurs when an extracytoplasmic signal (periplasmic stress and excess LPS) triggers a concerted proteolytic cascade to transmit information and elicit cellular responses. The anti-sigma factor RseA is an inner membrane protein, binding sigma-E in the cytoplasm and RseB in the periplasm. RseA is first cut extracytoplasmically (site-1 protease, S1P, by DegS), then within the membrane itself (site-2 protease, S2P, by RseP), while cytoplasmic proteases (predominantly ClpX-ClpP) finish degrading the regulatory protein, liberating sigma-E. Degradation of RseA requires 2 signals to activate DegS; an outer membrane protein (OMP) signal activates DegS, while an LPS signal causes release of RseB from RseA, freeing RseA to be cleaved. Functionally, sigma factors are initiation factors that promote the attachment of RNA polymerase (RNAP) to specific initiation sites and are then released. Extracytoplasmic function (ECF) sigma-E controls the envelope stress response, responding to periplasmic protein stress, increased levels of periplasmic lipopolysaccharide (LPS) as well as heat shock and oxidative stress; it controls protein processing in the extracytoplasmic compartment. This Haemophilus influenzae (strain ATCC 51907 / DSM 11121 / KW20 / Rd) protein is ECF RNA polymerase sigma-E factor (rpoE).